A 776-amino-acid polypeptide reads, in one-letter code: MSSTRSQNPHGLKQIGLDQIWDDLRAGIQQVYTRQSMAKSRYMELYTHVYNYCTSVHQSNQARGAGVPPSKSKKGQTPGGAQFVGLELYKRLKEFLKNYLTNLLKDGEDLMDESVLKFYTQQWEDYRFSSKVLNGICAYLNRHWVRRECDEGRKGIYEIYSLALVTWRDCLFRPLNKQVTNAVLKLIEKERNGETINTRLISGVVQSYVELGLNEDDAFAKGPTLTVYKESFESQFLADTERFYTRESTEFLQQNPVTEYMKKAEARLLEEQRRVQVYLHESTQDELARKCEQVLIEKHLEIFHTEFQNLLDADKNEDLGRMYNLVSRIQDGLGELKKLLETHIHNQGLAAIEKCGEAALNDPKMYVQTVLDVHKKYNALVMSAFNNDAGFVAALDKACGRFINNNAVTKMAQSSSKSPELLARYCDSLLKKSSKNPEEAELEDTLNQVMVVFKYIEDKDVFQKFYAKMLAKRLVHQNSASDDAEASMISKLKQACGFEYTSKLQRMFQDIGVSKDLNEQFKKHLTNSEPLDLDFSIQVLSSGSWPFQQSCTFALPSELERSYQRFTAFYASRHSGRKLTWLYQLSKGELVTNCFKNRYTLQASTFQMAILLQYNTEDAYTVQQLTDSTQIKMDILAQVLQILLKSKLLVLEDENANVDEVELKPDTLIKLYLGYKNKKLRVNINVPMKTEQKQEQETTHKNIEEDRKLLIQAAIVRIMKMRKVLKHQQLLGEVLTQLSSRFKPRVPVIKKCIDILIEKEYLERVDGEKDTYSYLA.

The residue at position 63 (R63) is an Omega-N-methylarginine. Residues 706–766 (DRKLLIQAAI…IEKEYLERVD (61 aa)) form the Cullin neddylation domain. K720 participates in a covalent cross-link: Glycyl lysine isopeptide (Lys-Gly) (interchain with G-Cter in NEDD8).

Belongs to the cullin family. Component of multiple Cul1-RING E3 ubiquitin-protein ligase complexes commonly known as SCF (SKP1-CUL1-F-box) complexes, consisting of CUL1, SKP1, RBX1 and a variable F-box domain-containing protein as substrate-specific subunit. Component of the SCF(FBXW11) complex containing FBXW11. Component of the SCF(SKP2) complex containing SKP2, in which it interacts directly with SKP1, SKP2 and RBX1. Component of the SCF(FBXW2) complex containing FBXW2. Component of the SCF(FBXO32) complex containing FBXO32. Component of the probable SCF(FBXO7) complex containing FBXO7. Component of the SCF(FBXO10) complex containing FBXO10. Component of the SCF(FBXO11) complex containing FBXO11. Component of the SCF(FBXO25) complex containing FBXO25. Component of the SCF(FBXO33) complex containing FBXO33. Component of the probable SCF(FBXO4) complex containing FBXO4. Component of the SCF(FBXO44) complex, composed of SKP1, CUL1 and FBXO44. Component of the SCF(BTRC) complex, composed of SKP1, CUL1 and BTRC. This complex binds phosphorylated NFKBIA. Part of a SCF complex consisting of CUL1, RBX1, SKP1 and FBXO2. Component of a SCF(SKP2)-like complex containing CUL1, SKP1, TRIM21 and SKP2. Component of the SCF(FBXO17) complex, composed of SKP1, CUL1 and FBXO17. Component of the SCF(FBXO27) complex, composed of SKP1, CUL1 and FBXO27. Component of the SCF(CCNF) complex consisting of CUL1, RBX1, SKP1 and CCNF. Interacts with CCNF. Component of the SCF(FBXL3) complex composed of CUL1, SKP1, RBX1 and FBXL3. Component of the SCF(FBXL21) complex composed of CUL1, SKP1, RBX1 and FBXL21. Component of the SCF(FBXO9) composed of CUL1, SKP1, RBX1 and FBXO9. Component of the SCF(FBXW7) composed of CUL1, SKP1, RBX1 and FBXW7. Component of the SCF(FBXO31) complex composed of CUL1, SKP1, RBX1 and FBXO31. Interacts with CHEK2; mediates CHEK2 ubiquitination and regulates its function. Part of a complex with TIP120A/CAND1 and RBX1. The unneddylated form interacts with TIP120A/CAND1 and the interaction mediates the exchange of the F-box substrate-specific subunit. Can self-associate. Interacts with FBXW8. Interacts with RNF7. Interacts with TRIM21. Interacts with COPS2. Interacts with UBE2M. Identified in a complex with RBX1 and GLMN. Interacts with CEP68 as part of the SCF(FBXW11) complex; the interaction is probably mediated by FBXW11 and the complex also contains CDK5RAP2 and PCNT. Interacts (when neddylated) with ARIH1; leading to activate the E3 ligase activity of ARIH1. Interacts with COPS9 isoform 2. Interacts with UBXN1. Interacts with KAT7, probably as part of an SCF complex; the interaction mediates KAT7 ubiquitination. Interacts with NOTCH2. Part of a complex that contains DCUN1D5, CUL1 and RBX1; this complex is bridged by CUL1. Interacts (unneddylated form) with DCUN1D1, DCUN1D2, DCUN1D3, DCUN1D4 and DCUN1D5; these interactions promote the cullin neddylation. Interacts (via the C-terminal domain) with CUL7; the interaction seems to be mediated by FBXW8; it is likely specific to FBXW8, but not other F-box proteins. Interacts with UBR2, as part of SCF(BTRC) complex; the interaction mediates 'Lys-48'-linked ubiquitination of UBR2 and is regulated by DUSP22 in the T-cell receptor signaling pathway. As to quaternary structure, (Microbial infection) Interacts with Epstein-Barr virus BPLF1. In terms of assembly, (Microbial infection) Interacts with Human adenovirus early E1A protein; this interaction inhibits RBX1-CUL1-dependent elongation reaction of ubiquitin chains by the SCF(FBXW7) complex. (Microbial infection) Interacts with vaccinia virus protein C9L. As to quaternary structure, (Microbial infection) Interacts with Epstein-Barr virus (EBV) tegument protein BGLF2; this interaction might facilitate CUL1 recruitment to STAT2, leading to ubiquitination and degradation of the latter. Neddylated; which enhances the ubiquitination activity of SCF. Neddylation prevents binding of the inhibitor CAND1. Neddylation leads to structural rearrangment in the complex that allows interaction between the E2 ubiquitin-conjugating enzyme and the acceptor ubiquitin. Deneddylated via its interaction with the COP9 signalosome (CSN) complex. In terms of processing, (Microbial infection) Deneddylated by Epstein-Barr virus BPLF1 leading to a S-phase-like environment that is required for efficient replication of the viral genome. Expressed in lung fibroblasts.

The protein operates within protein modification; protein ubiquitination. Functionally, core component of multiple cullin-RING-based SCF (SKP1-CUL1-F-box protein) E3 ubiquitin-protein ligase complexes, which mediate the ubiquitination of proteins involved in cell cycle progression, signal transduction and transcription. SCF complexes and ARIH1 collaborate in tandem to mediate ubiquitination of target proteins. In the SCF complex, serves as a rigid scaffold that organizes the SKP1-F-box protein and RBX1 subunits. May contribute to catalysis through positioning of the substrate and the ubiquitin-conjugating enzyme. The E3 ubiquitin-protein ligase activity of the complex is dependent on the neddylation of the cullin subunit and exchange of the substrate recognition component is mediated by TIP120A/CAND1. The functional specificity of the SCF complex depends on the F-box protein as substrate recognition component. SCF(BTRC) and SCF(FBXW11) direct ubiquitination of CTNNB1 and participate in Wnt signaling. SCF(FBXW11) directs ubiquitination of phosphorylated NFKBIA. SCF(BTRC) directs ubiquitination of NFKBIB, NFKBIE, ATF4, SMAD3, SMAD4, CDC25A, FBXO5 and probably NFKB2. SCF(BTRC) and/or SCF(FBXW11) direct ubiquitination of CEP68. SCF(SKP2) directs ubiquitination of phosphorylated CDKN1B/p27kip and is involved in regulation of G1/S transition. SCF(SKP2) directs ubiquitination of ORC1, CDT1, RBL2, ELF4, CDKN1A, RAG2, FOXO1A, and probably MYC and TAL1. SCF(FBXW7) directs ubiquitination of CCNE1, NOTCH1 released notch intracellular domain (NICD), and probably PSEN1. SCF(FBXW2) directs ubiquitination of GCM1. SCF(FBXO32) directs ubiquitination of MYOD1. SCF(FBXO7) directs ubiquitination of BIRC2 and DLGAP5. SCF(FBXO33) directs ubiquitination of YBX1. SCF(FBXO1) directs ubiquitination of BCL6 and DTL but does not seem to direct ubiquitination of TP53. SCF(BTRC) mediates the ubiquitination of NFKBIA at 'Lys-21' and 'Lys-22'; the degradation frees the associated NFKB1-RELA dimer to translocate into the nucleus and to activate transcription. SCF(CCNF) directs ubiquitination of CCP110. SCF(FBXL3) and SCF(FBXL21) direct ubiquitination of CRY1 and CRY2. SCF(FBXO9) directs ubiquitination of TTI1 and TELO2. SCF(FBXO10) directs ubiquitination of BCL2. Neddylated CUL1-RBX1 ubiquitinates p53/TP53 recruited by Cul7-RING(FBXW8) complex. SCF(BTRC) directs 'Lys-48'-linked ubiquitination of UBR2 in the T-cell receptor signaling pathway. The SCF(FBXO31) protein ligase complex specifically mediates the ubiquitination of proteins amidated at their C-terminus in response to oxidative stress. The sequence is that of Cullin-1 (CUL1) from Homo sapiens (Human).